Consider the following 324-residue polypeptide: Beta-ketoacyl-[acyl-carrier-protein] synthase III (324 aa).

Residues cysteine 112 and histidine 251 contribute to the active site. The tract at residues 252–256 (QANLR) is ACP-binding. Asparagine 281 is an active-site residue.

Belongs to the thiolase-like superfamily. FabH family. In terms of assembly, homodimer.

It is found in the cytoplasm. It carries out the reaction malonyl-[ACP] + acetyl-CoA + H(+) = 3-oxobutanoyl-[ACP] + CO2 + CoA. It participates in lipid metabolism; fatty acid biosynthesis. In terms of biological role, catalyzes the condensation reaction of fatty acid synthesis by the addition to an acyl acceptor of two carbons from malonyl-ACP. Catalyzes the first condensation reaction which initiates fatty acid synthesis and may therefore play a role in governing the total rate of fatty acid production. Possesses both acetoacetyl-ACP synthase and acetyl transacylase activities. Its substrate specificity determines the biosynthesis of branched-chain and/or straight-chain of fatty acids. The sequence is that of Beta-ketoacyl-[acyl-carrier-protein] synthase III from Clostridium perfringens (strain ATCC 13124 / DSM 756 / JCM 1290 / NCIMB 6125 / NCTC 8237 / Type A).